The chain runs to 527 residues: L-amino-acid oxidase (527 aa).

Residues 1 to 27 form the signal peptide; it reads MDLHRAPWKSSAAAAVLLLALFSGAAA. Cysteine 37 and cysteine 200 form a disulfide bridge. A glycan (N-linked (GlcNAc...) asparagine) is linked at asparagine 58. FAD-binding positions include 70 to 71, 90 to 91, arginine 98, 114 to 117, and valine 288; these read VA, EA, and GAMR. A substrate-binding site is contributed by arginine 117. An N-linked (GlcNAc...) asparagine glycan is attached at asparagine 393. Substrate is bound at residue tyrosine 403. FAD-binding positions include glutamate 485 and 492–497; that span reads AWMESA. 492 to 493 lines the substrate pocket; the sequence is AW.

Homodimer. It depends on FAD as a cofactor. In terms of tissue distribution, expression mainly observed in plasma, spleen, kidney and gills with low levels detected in blood and no expression detected in brain, liver, heart, muscle or intestine (at protein level).

It localises to the secreted. It carries out the reaction an L-alpha-amino acid + O2 + H2O = a 2-oxocarboxylate + H2O2 + NH4(+). Its function is as follows. Inhibits the growth of both Gram-negative and Gram-positive bacteria. Displays strong antibacterial activity towards V.cholerae and E.tarda. Causes deformation of the surface of S.aureus and the formation of pores on the surface of E.coli. Strong antiparasitic activity is seen towards C.irritans, T.brucei and I.multifiliis. Cilia of treated theronts are lost and the macronucleus swells, inducing cell membrane rupture and efflux of the cytoplasm. This chain is L-amino-acid oxidase, found in Siganus canaliculatus (White-spotted spinefoot).